Here is a 143-residue protein sequence, read N- to C-terminus: MAMTAAAVPSSGSFQKQDEEWRAVLSPEQFRVLRLKGTDKRGKGEFTKKFEEGTYSCAGCGTALYKSTTKFDSGCGWPAFFDAIPGAIKQTPEAGGRRMEITCAVCDGHLGHVFKGEGYSTPTDQRHCVNSVSLKFASADSSK.

The region spanning 18-139 is the MsrB domain; that stretch reads DEEWRAVLSP…NSVSLKFASA (122 aa). 4 residues coordinate Zn(2+): cysteine 57, cysteine 60, cysteine 103, and cysteine 106. An intrachain disulfide couples cysteine 75 to cysteine 128. The Nucleophile role is filled by cysteine 128.

Belongs to the MsrB Met sulfoxide reductase family. Requires Zn(2+) as cofactor.

The protein resides in the cytoplasm. Its subcellular location is the cytosol. It carries out the reaction L-methionyl-[protein] + [thioredoxin]-disulfide + H2O = L-methionyl-(R)-S-oxide-[protein] + [thioredoxin]-dithiol. In terms of biological role, catalyzes the reduction of methionine sulfoxide (MetSO) to methionine in proteins. Plays a protective role against oxidative stress by restoring activity to proteins that have been inactivated by methionine oxidation. MSRB family specifically reduces the MetSO R-enantiomer. This chain is Peptide methionine sulfoxide reductase B8 (MSRB8), found in Arabidopsis thaliana (Mouse-ear cress).